The primary structure comprises 189 residues: UPF0301 protein PSEEN5058 (189 aa).

This sequence belongs to the UPF0301 (AlgH) family.

The chain is UPF0301 protein PSEEN5058 from Pseudomonas entomophila (strain L48).